A 168-amino-acid polypeptide reads, in one-letter code: Pathogenesis-related protein 1A (168 aa).

Positions 1–30 are cleaved as a signal peptide; sequence MGFVLFSQLPSFLLVSTLLLFLVISHSCRA. One can recognise an SCP domain in the interval 38–156; it reads LDAHNTARAD…NGGYVVSCNY (119 aa).

It belongs to the CRISP family. In terms of processing, three disulfide bonds are present.

It localises to the vacuole. Probably involved in the defense reaction of plants against pathogens. The sequence is that of Pathogenesis-related protein 1A from Nicotiana tabacum (Common tobacco).